A 491-amino-acid chain; its full sequence is Nucleoside transporter 1.1 (491 aa).

The next 6 membrane-spanning stretches (helical) occupy residues 27-47 (FYVY…VNAV), 82-102 (YNLI…LSWF), 109-129 (VRLL…MVVP), 136-156 (AGAV…KSIF), 173-193 (STMM…QIIV), and 209-229 (KIYY…LILL). Over residues 260–273 (CHTDEHPTHDKEGR) the composition is skewed to basic and acidic residues. Disordered stretches follow at residues 260–280 (CHTD…SGKE) and 290–309 (AAAK…PHEV). N-linked (GlcNAc...) asparagine glycosylation occurs at Asn274. 5 helical membrane-spanning segments follow: residues 333–353 (MFVA…GIAV), 361–381 (WFST…RFSP), 395–415 (WIIV…LLHS), 427–447 (VMEV…LVLG), and 460–480 (FVAG…GTVL).

This sequence belongs to the SLC29A/ENT transporter (TC 2.A.57) family.

The protein localises to the membrane. The enzyme catalyses adenosine(in) + H(+)(in) = adenosine(out) + H(+)(out). The catalysed reaction is uridine(in) + H(+)(in) = uridine(out) + H(+)(out). Functionally, sodium-independent high affinity nucleoside:H(+) symporter; transports adenosine and uridine. Can transport cytidine and thymidine. The chain is Nucleoside transporter 1.1 from Leishmania donovani.